Consider the following 261-residue polypeptide: Zinc import ATP-binding protein ZnuC (261 aa).

Residues 6–221 (IRLEKVAVRF…PAFVELFGNN (216 aa)) form the ABC transporter domain. Residue 38-45 (GPNGAGKT) participates in ATP binding.

It belongs to the ABC transporter superfamily. Zinc importer (TC 3.A.1.15.5) family. The complex is composed of two ATP-binding proteins (ZnuC), two transmembrane proteins (ZnuB) and a solute-binding protein (ZnuA).

It localises to the cell inner membrane. It catalyses the reaction Zn(2+)(out) + ATP(in) + H2O(in) = Zn(2+)(in) + ADP(in) + phosphate(in) + H(+)(in). Part of the ABC transporter complex ZnuABC involved in zinc import. Responsible for energy coupling to the transport system. This chain is Zinc import ATP-binding protein ZnuC, found in Pseudomonas fluorescens (strain Pf0-1).